The chain runs to 49 residues: Light-harvesting protein B-880 alpha chain (49 aa).

Residues 1–12 (MYKLWLLFDPRR) are Cytoplasmic-facing. The chain crosses the membrane as a helical span at residues 13 to 33 (TLVALSAFLFVLGLIIHFISL). His-29 is an a bacteriochlorophyll binding site. Topologically, residues 34–49 (STDRFNWLEGKPAVRA) are periplasmic.

Belongs to the antenna complex alpha subunit family. The core complex is formed by different alpha and beta chains, binding bacteriochlorophyll molecules, and arranged most probably in tetrameric structures disposed around the reaction center. The non-pigmented gamma chains may constitute additional components.

It localises to the cell inner membrane. Functionally, antenna complexes are light-harvesting systems, which transfer the excitation energy to the reaction centers. The chain is Light-harvesting protein B-880 alpha chain from Rhodoblastus acidophilus (Rhodopseudomonas acidophila).